The following is a 228-amino-acid chain: Putative elongation factor Tu-like protein (228 aa).

The 207-residue stretch at 6 to 212 (KPHINVGTIG…LPIREKDNPF (207 aa)) folds into the tr-type G domain. The interval 15–22 (GHVDHGKT) is G1. Positions 59–63 (GITIS) are G2. The segment at 80–83 (DCPG) is G3. Positions 135-138 (NKCD) are G4. The interval 173 to 175 (SAV) is G5.

The protein belongs to the TRAFAC class translation factor GTPase superfamily. Classic translation factor GTPase family. EF-Tu/EF-1A subfamily.

This chain is Putative elongation factor Tu-like protein, found in Ehrlichia ruminantium (strain Welgevonden).